Reading from the N-terminus, the 128-residue chain is Glycine cleavage system H protein (128 aa).

The Lipoyl-binding domain occupies 25-107; sequence TITVGITHHA…YGAGWFFKLK (83 aa). Position 66 is an N6-lipoyllysine (Lys66).

The protein belongs to the GcvH family. The glycine cleavage system is composed of four proteins: P, T, L and H. It depends on (R)-lipoate as a cofactor.

Functionally, the glycine cleavage system catalyzes the degradation of glycine. The H protein shuttles the methylamine group of glycine from the P protein to the T protein. The polypeptide is Glycine cleavage system H protein (Neisseria meningitidis serogroup B (strain ATCC BAA-335 / MC58)).